We begin with the raw amino-acid sequence, 239 residues long: Probable 2-phosphosulfolactate phosphatase (239 aa).

Belongs to the ComB family. Requires Mg(2+) as cofactor.

It carries out the reaction (2R)-O-phospho-3-sulfolactate + H2O = (2R)-3-sulfolactate + phosphate. This is Probable 2-phosphosulfolactate phosphatase from Clostridium botulinum (strain Loch Maree / Type A3).